The sequence spans 160 residues: UPF0262 protein Mmar10_1128 (160 aa).

It belongs to the UPF0262 family.

In Maricaulis maris (strain MCS10) (Caulobacter maris), this protein is UPF0262 protein Mmar10_1128.